The sequence spans 406 residues: E3 ubiquitin-protein ligase RING1 (406 aa).

Thr-24 carries the post-translational modification Phosphothreonine. Residues 30–234 (MDGTEIAVSP…GGAGSEDSGD (205 aa)) are necessary for transcriptional repression. Phosphoserine is present on Ser-38. The segment at 48-88 (CPICLDMLKNTMTTKECLHRFCSDCIVTALRSGNKECPTCR) adopts an RING-type zinc-finger fold. Residues Ser-140, Ser-187, and Ser-190 each carry the phosphoserine modification. Disordered stretches follow at residues 148-263 (QAMH…GEIE) and 309-354 (QQQE…PSLE). Positions 175–187 (EPGEGEGDGEDVS) are enriched in acidic residues. Positions 201–204 (KRPR) match the Nuclear localization signal motif. Over residues 205 to 228 (GGGAGGSSVGTGGGGTGGVGGGAG) the composition is skewed to gly residues. A phosphothreonine mark is found at Thr-215 and Thr-220. Phosphoserine occurs at positions 229 and 232. Residues 230–406 (EDSGDRGGTL…LCYAPTKDPK (177 aa)) form a necessary for interaction with CBX2 region. The span at 235 to 244 (RGGTLGGGTL) shows a compositional bias: gly residues. Residues 246–258 (PPSPPGAPSPPEP) are compositionally biased toward pro residues. Residues Ser-248 and Ser-254 each carry the phosphoserine modification. Positions 315-343 (EPGGPGGGASDTGGPDGCGGEGGGAGGGD) are enriched in gly residues.

In terms of assembly, component of chromatin-associated Polycomb (PcG) complexes. Interacts with BMI1. Part of the E2F6.com-1 complex in G0 phase composed of E2F6, MGA, MAX, TFDP1, CBX3, BAT8, EUHMTASE1, RING1, RNF2/RING2 MBLR, L3MBTL2 and YAF2. Interacts with CBX2 and PCGF6. Component of a PRC1-like complex. Component of repressive BCOR complex containing Polycomb group subcomplex at least composed of RYBP, PCGF1, BCOR and RNF2/RING2. Interacts with PCGF2, RNF2; CBX6, CBX7 and CBX8. Interacts with PHC2. Interacts with MN1. Interacts with USP26.

Its subcellular location is the nucleus. The protein localises to the nucleus speckle. The enzyme catalyses S-ubiquitinyl-[E2 ubiquitin-conjugating enzyme]-L-cysteine + [acceptor protein]-L-lysine = [E2 ubiquitin-conjugating enzyme]-L-cysteine + N(6)-ubiquitinyl-[acceptor protein]-L-lysine.. It participates in protein modification; protein ubiquitination. In terms of biological role, constitutes one of the E3 ubiquitin-protein ligases that mediate monoubiquitination of 'Lys-119' of histone H2A, thereby playing a central role in histone code and gene regulation. H2A 'Lys-119' ubiquitination gives a specific tag for epigenetic transcriptional repression and participates in X chromosome inactivation of female mammals. Essential component of a Polycomb group (PcG) multiprotein PRC1-like complex, a complex class required to maintain the transcriptionally repressive state of many genes, including Hox genes, throughout development. PcG PRC1 complex acts via chromatin remodeling and modification of histones, rendering chromatin heritably changed in its expressibility. Compared to RNF2/RING2, it does not have the main E3 ubiquitin ligase activity on histone H2A, and it may rather act as a modulator of RNF2/RING2 activity. The sequence is that of E3 ubiquitin-protein ligase RING1 from Homo sapiens (Human).